The sequence spans 146 residues: uncharacterized protein (146 aa).

Positions 119-128 are enriched in basic and acidic residues; the sequence is AQADLEHEES. Residues 119–146 form a disordered region; it reads AQADLEHEESASIDQDEMVAIETRKTKK.

This is an uncharacterized protein from Schizosaccharomyces pombe (strain 972 / ATCC 24843) (Fission yeast).